We begin with the raw amino-acid sequence, 160 residues long: Transcription elongation factor GreA (160 aa).

The stretch at glutamate 12 to serine 76 forms a coiled coil.

This sequence belongs to the GreA/GreB family.

Necessary for efficient RNA polymerase transcription elongation past template-encoded arresting sites. The arresting sites in DNA have the property of trapping a certain fraction of elongating RNA polymerases that pass through, resulting in locked ternary complexes. Cleavage of the nascent transcript by cleavage factors such as GreA or GreB allows the resumption of elongation from the new 3'terminus. GreA releases sequences of 2 to 3 nucleotides. This is Transcription elongation factor GreA from Clostridium botulinum (strain Kyoto / Type A2).